The following is a 341-amino-acid chain: Heat-inducible transcription repressor HrcA (341 aa).

Belongs to the HrcA family.

Its function is as follows. Negative regulator of class I heat shock genes (grpE-dnaK-dnaJ and groELS operons). Prevents heat-shock induction of these operons. This is Heat-inducible transcription repressor HrcA from Corynebacterium glutamicum (strain ATCC 13032 / DSM 20300 / JCM 1318 / BCRC 11384 / CCUG 27702 / LMG 3730 / NBRC 12168 / NCIMB 10025 / NRRL B-2784 / 534).